Reading from the N-terminus, the 83-residue chain is Small ribosomal subunit protein bS16c (83 aa).

The protein belongs to the bacterial ribosomal protein bS16 family.

It is found in the plastid. The protein localises to the chloroplast. This is Small ribosomal subunit protein bS16c from Chaetosphaeridium globosum (Charophycean green alga).